The chain runs to 424 residues: Carbohydrate sulfotransferase 8 (424 aa).

The Cytoplasmic portion of the chain corresponds to 1 to 10 (MTLRPGTMRL). The helical; Signal-anchor for type II membrane protein transmembrane segment at 11-31 (ACMFSSILLFGAAGLLLFISL) threads the bilayer. The Lumenal portion of the chain corresponds to 32–424 (QDPTELAPQQ…NYSKPFADLY (393 aa)). The tract at residues 47-107 (FNIRPRQPHH…PLQRGTRLRL (61 aa)) is disordered. Over residues 66 to 77 (GDLKEPTERVTR) the composition is skewed to basic and acidic residues. The N-linked (GlcNAc...) asparagine glycan is linked to asparagine 128. 3'-phosphoadenylyl sulfate contacts are provided by residues 198–204 (PKAGCSN) and 258–266 (REPFERLVS). 3 N-linked (GlcNAc...) asparagine glycosylation sites follow: asparagine 294, asparagine 367, and asparagine 415.

Belongs to the sulfotransferase 2 family. Predominantly expressed in pituitary gland. In brain, it is expressed in pituitary gland, cerebellum, medulla oblongata, pons, thalamus and spinal cord. Expressed in the epidermis. Expressed at lower level in lung, spleen, adrenal gland, placenta, prostate, testis, mammary gland and trachea.

The protein localises to the golgi apparatus membrane. In terms of biological role, catalyzes the transfer of sulfate to position 4 of non-reducing N-acetylgalactosamine (GalNAc) residues in both N-glycans and O-glycans. Required for biosynthesis of glycoprotein hormones lutropin and thyrotropin, by mediating sulfation of their carbohydrate structures. Only active against terminal GalNAcbeta1,GalNAcbeta. Not active toward chondroitin. In Homo sapiens (Human), this protein is Carbohydrate sulfotransferase 8 (CHST8).